The following is a 167-amino-acid chain: Gametocyte-specific factor 1 (167 aa).

2 consecutive CHHC U11-48K-type zinc fingers follow at residues 14-41 (LLQC…RKNH) and 48-75 (LATC…DDKS). Zn(2+)-binding residues include Cys17, His23, His33, Cys37, Cys51, His57, His67, and Cys71.

Belongs to the UPF0224 (FAM112) family.

The protein localises to the cytoplasm. In terms of biological role, required for spermatogenesis and is involved in the suppression of retrotransposon transcription in male germ cells. The chain is Gametocyte-specific factor 1 (GTSF1) from Bos taurus (Bovine).